Here is a 260-residue protein sequence, read N- to C-terminus: UPF0246 protein Bamb_2261 (260 aa).

The protein belongs to the UPF0246 family.

This chain is UPF0246 protein Bamb_2261, found in Burkholderia ambifaria (strain ATCC BAA-244 / DSM 16087 / CCUG 44356 / LMG 19182 / AMMD) (Burkholderia cepacia (strain AMMD)).